The following is a 509-amino-acid chain: Aspartyl/glutamyl-tRNA(Asn/Gln) amidotransferase subunit B (509 aa).

Belongs to the GatB/GatE family. GatB subfamily. As to quaternary structure, heterotrimer of A, B and C subunits.

It carries out the reaction L-glutamyl-tRNA(Gln) + L-glutamine + ATP + H2O = L-glutaminyl-tRNA(Gln) + L-glutamate + ADP + phosphate + H(+). It catalyses the reaction L-aspartyl-tRNA(Asn) + L-glutamine + ATP + H2O = L-asparaginyl-tRNA(Asn) + L-glutamate + ADP + phosphate + 2 H(+). In terms of biological role, allows the formation of correctly charged Asn-tRNA(Asn) or Gln-tRNA(Gln) through the transamidation of misacylated Asp-tRNA(Asn) or Glu-tRNA(Gln) in organisms which lack either or both of asparaginyl-tRNA or glutaminyl-tRNA synthetases. The reaction takes place in the presence of glutamine and ATP through an activated phospho-Asp-tRNA(Asn) or phospho-Glu-tRNA(Gln). In Psychrobacter arcticus (strain DSM 17307 / VKM B-2377 / 273-4), this protein is Aspartyl/glutamyl-tRNA(Asn/Gln) amidotransferase subunit B.